The primary structure comprises 1258 residues: Plasma membrane calcium-transporting ATPase 3 (1258 aa).

Polar residues predominate over residues 1–19; that stretch reads MGDMANSSIEFHPKPQQQR. Residues 1–22 form a disordered region; sequence MGDMANSSIEFHPKPQQQREVP. Residues 1 to 97 lie on the Cytoplasmic side of the membrane; that stretch reads MGDMANSSIE…NFIPPKQPKT (97 aa). The residue at position 8 (Ser8) is a Phosphoserine. Residues 98–118 form a helical membrane-spanning segment; that stretch reads FLQLVWEALQDVTLIILEVAA. Over 119 to 155 the chain is Extracellular; sequence IVSLGLSFYAPPGEESEACGNVSGGAEDEGEAEAGWI. Residues 156 to 176 traverse the membrane as a helical segment; that stretch reads EGAAILLSVICVVLVTAFNDW. Over 177–364 the chain is Cytoplasmic; that stretch reads SKEKQFRGLQ…KEKSVLQGKL (188 aa). Disordered regions lie at residues 298–328 and 335–354; these read EEEK…GAVA and KSAE…NVPK. 2 stretches are compositionally biased toward basic and acidic residues: residues 299–308 and 342–354; these read EEKKDKKGKQ and MEER…NVPK. A helical transmembrane segment spans residues 365–384; it reads TKLAVQIGKAGLVMSAITVI. The Extracellular segment spans residues 385-417; the sequence is ILVLYFVIETFVVDGRVWLAECTPVYVQYFVKF. Residues 418–435 form a helical membrane-spanning segment; it reads FIIGVTVLVVAVPEGLPL. At 436-849 the chain is on the cytoplasmic side; the sequence is AVTISLAYSV…MWGRNVYDSI (414 aa). Asp473 acts as the 4-aspartylphosphate intermediate in catalysis. Residues Asp794 and Asp798 each contribute to the Mg(2+) site. Residues 850-869 traverse the membrane as a helical segment; that stretch reads SKFLQFQLTVNVVAVIVAFT. Residues 870–879 are Extracellular-facing; sequence GACITQDSPL. The chain crosses the membrane as a helical span at residues 880-900; that stretch reads KAVQMLWVNLIMDTFASLALA. The Cytoplasmic segment spans residues 901–920; the sequence is TEPPTESLLLRKPYGRDKPL. A helical membrane pass occupies residues 921 to 943; it reads ISRTMMKNILGHAVYQLTIIFTL. Over 944–961 the chain is Extracellular; the sequence is LFVGELFFDIDSGRNAPL. A helical transmembrane segment spans residues 962–983; it reads HSPPSEHYTIIFNTFVMMQLFN. Topologically, residues 984–1002 are cytoplasmic; sequence EINARKIHGERNVFDGIFS. A helical membrane pass occupies residues 1003–1024; sequence NPIFCTIVLGTFGIQIVIVQFG. The Extracellular segment spans residues 1025–1034; the sequence is GKPFSCSPLS. Residues 1035-1056 traverse the membrane as a helical segment; that stretch reads TEQWLWCLFVGVGELVWGQVIA. The Cytoplasmic portion of the chain corresponds to 1057–1258; sequence TIPTSQLKCL…SPLHSMETSL (202 aa). Position 1079 is a phosphothreonine (Thr1079). Residues 1097 to 1114 are calmodulin-binding subdomain A; it reads LRRGQILWFRGLNRIQTQ. Thr1113 carries the phosphothreonine; by PKC modification. The calmodulin-binding subdomain B stretch occupies residues 1115–1124; the sequence is MEVVSTFKRS. Ser1126 bears the Phosphoserine mark. Positions 1204–1258 are disordered; the sequence is ENEERLRAPPPPPPNQNNNAIDSGIYLTTHATKSATSSAFSSRPGSPLHSMETSL. Residues 1231–1245 show a composition bias toward low complexity; it reads TTHATKSATSSAFSS.

It belongs to the cation transport ATPase (P-type) (TC 3.A.3) family. Type IIB subfamily. Interacts with PDZD11. Interacts (via N-terminus) with YWHAE. As to expression, expressed predominantly in brain and skeletal muscle. Expressed in the molecular layer of the cerebellar cortex, in particular in granule cells (at protein level). Expressed in aldosterone producing glomerulosa cells of adrenal glands (at protein level). Detected at low levels in various tissues including testis, stomach, small intestine, and large intestine. Most abundant form in brain and most other tissues. In terms of tissue distribution, most abundant form in skeletal muscle and is also found in brain and at low levels in testis and kidney.

It is found in the cell membrane. Its subcellular location is the presynaptic cell membrane. It carries out the reaction Ca(2+)(in) + ATP + H2O = Ca(2+)(out) + ADP + phosphate + H(+). ATP-driven Ca(2+) ion pump involved in the maintenance of basal intracellular Ca(2+) levels at the presynaptic terminals. Uses ATP as an energy source to transport cytosolic Ca(2+) ions across the plasma membrane to the extracellular compartment. May counter-transport protons, but the mechanism and the stoichiometry of this Ca(2+)/H(+) exchange remains to be established. The protein is Plasma membrane calcium-transporting ATPase 3 (Atp2b3) of Rattus norvegicus (Rat).